The following is a 277-amino-acid chain: uncharacterized protein (277 aa).

2 disordered regions span residues 33-168 and 210-277; these read KNDN…VTTR and NKLL…PIEF. The segment covering 34–45 has biased composition (basic and acidic residues); the sequence is NDNDERTAHEES. Positions 86-99 are enriched in basic residues; it reads LKSKSKRKTKKGGS. 3 stretches are compositionally biased toward basic and acidic residues: residues 100 to 113, 151 to 168, and 216 to 230; these read KPRE…KHIV, AKEL…VTTR, and TNED…NKEK. The segment covering 231 to 241 has biased composition (basic residues); sequence DRKRRERRTAR. Residues 242-258 show a composition bias toward basic and acidic residues; sequence RKDERKQEKKQEKKQDN. Residues 259 to 271 show a composition bias toward polar residues; it reads KTSQSFPSSTDMN.

The protein resides in the cytoplasm. This is an uncharacterized protein from Saccharomyces cerevisiae (strain ATCC 204508 / S288c) (Baker's yeast).